The sequence spans 493 residues: Telomere-binding protein subunit alpha (493 aa).

Residues M1–S30 form a disordered region. Basic residues predominate over residues S7–A17.

This sequence belongs to the telombin family. Heterodimer of an alpha and a beta subunit.

It is found in the nucleus. It localises to the chromosome. The protein localises to the telomere. In terms of biological role, may function as protective capping of the single-stranded telomeric overhang. May also participate in telomere length regulation during DNA replication. The protein is Telomere-binding protein subunit alpha (STY56V) of Stylonychia mytilus (Ciliate).